Reading from the N-terminus, the 265-residue chain is Undecaprenyl-diphosphatase (265 aa).

The next 7 helical transmembrane spans lie at 38–58, 75–95, 108–128, 135–155, 181–201, 215–235, and 244–264; these read RSDF…CLAL, RDYV…GLIV, PVAW…HVAG, VVTW…GVFP, FVFM…LLEM, VAVA…WLLS, and VFAV…PAAA.

The protein belongs to the UppP family.

It localises to the cell inner membrane. The catalysed reaction is di-trans,octa-cis-undecaprenyl diphosphate + H2O = di-trans,octa-cis-undecaprenyl phosphate + phosphate + H(+). Catalyzes the dephosphorylation of undecaprenyl diphosphate (UPP). Confers resistance to bacitracin. The polypeptide is Undecaprenyl-diphosphatase (Xanthomonas oryzae pv. oryzae (strain MAFF 311018)).